Here is a 168-residue protein sequence, read N- to C-terminus: Crossover junction endodeoxyribonuclease RuvC (168 aa).

Residues Asp8, Glu68, and Asp140 contribute to the active site. Mg(2+) contacts are provided by Asp8, Glu68, and Asp140.

The protein belongs to the RuvC family. As to quaternary structure, homodimer which binds Holliday junction (HJ) DNA. The HJ becomes 2-fold symmetrical on binding to RuvC with unstacked arms; it has a different conformation from HJ DNA in complex with RuvA. In the full resolvosome a probable DNA-RuvA(4)-RuvB(12)-RuvC(2) complex forms which resolves the HJ. Mg(2+) is required as a cofactor.

The protein localises to the cytoplasm. The enzyme catalyses Endonucleolytic cleavage at a junction such as a reciprocal single-stranded crossover between two homologous DNA duplexes (Holliday junction).. Functionally, the RuvA-RuvB-RuvC complex processes Holliday junction (HJ) DNA during genetic recombination and DNA repair. Endonuclease that resolves HJ intermediates. Cleaves cruciform DNA by making single-stranded nicks across the HJ at symmetrical positions within the homologous arms, yielding a 5'-phosphate and a 3'-hydroxyl group; requires a central core of homology in the junction. The consensus cleavage sequence is 5'-(A/T)TT(C/G)-3'. Cleavage occurs on the 3'-side of the TT dinucleotide at the point of strand exchange. HJ branch migration catalyzed by RuvA-RuvB allows RuvC to scan DNA until it finds its consensus sequence, where it cleaves and resolves the cruciform DNA. The polypeptide is Crossover junction endodeoxyribonuclease RuvC (Gluconacetobacter diazotrophicus (strain ATCC 49037 / DSM 5601 / CCUG 37298 / CIP 103539 / LMG 7603 / PAl5)).